A 141-amino-acid polypeptide reads, in one-letter code: Nucleoside diphosphate kinase (141 aa).

Positions 11, 59, 87, 93, 104, and 114 each coordinate ATP. The active-site Pros-phosphohistidine intermediate is H117.

It belongs to the NDK family. In terms of assembly, homotetramer. Requires Mg(2+) as cofactor.

Its subcellular location is the cytoplasm. It carries out the reaction a 2'-deoxyribonucleoside 5'-diphosphate + ATP = a 2'-deoxyribonucleoside 5'-triphosphate + ADP. The catalysed reaction is a ribonucleoside 5'-diphosphate + ATP = a ribonucleoside 5'-triphosphate + ADP. Its function is as follows. Major role in the synthesis of nucleoside triphosphates other than ATP. The ATP gamma phosphate is transferred to the NDP beta phosphate via a ping-pong mechanism, using a phosphorylated active-site intermediate. This is Nucleoside diphosphate kinase from Cupriavidus pinatubonensis (strain JMP 134 / LMG 1197) (Cupriavidus necator (strain JMP 134)).